A 921-amino-acid chain; its full sequence is Protein translocase subunit SecA (921 aa).

Residues Gln-86, 104–108 (GEGKT), and Asp-497 contribute to the ATP site. Residues 829-838 (QQAPQQQPQQ) are compositionally biased toward low complexity. Residues 829-921 (QQAPQQQPQQ…CHGAIETQKA (93 aa)) are disordered. Pro residues predominate over residues 839–855 (VAPPPRPQPPQPAPQPP). 4 residues coordinate Zn(2+): Cys-901, Cys-903, Cys-912, and His-913.

Belongs to the SecA family. As to quaternary structure, monomer and homodimer. Part of the essential Sec protein translocation apparatus which comprises SecA, SecYEG and auxiliary proteins SecDF-YajC and YidC. It depends on Zn(2+) as a cofactor.

Its subcellular location is the cell inner membrane. It localises to the cytoplasm. It carries out the reaction ATP + H2O + cellular proteinSide 1 = ADP + phosphate + cellular proteinSide 2.. Its function is as follows. Part of the Sec protein translocase complex. Interacts with the SecYEG preprotein conducting channel. Has a central role in coupling the hydrolysis of ATP to the transfer of proteins into and across the cell membrane, serving both as a receptor for the preprotein-SecB complex and as an ATP-driven molecular motor driving the stepwise translocation of polypeptide chains across the membrane. The chain is Protein translocase subunit SecA from Hyphomonas neptunium (strain ATCC 15444).